The chain runs to 440 residues: Ribulose bisphosphate carboxylase large chain (440 aa).

Lys-4 is modified (N6,N6,N6-trimethyllysine). Substrate-binding residues include Asn-113 and Thr-163. The active-site Proton acceptor is the Lys-165. Lys-167 contacts substrate. Residues Lys-191, Asp-193, and Glu-194 each coordinate Mg(2+). N6-carboxylysine is present on Lys-191. His-284 serves as the catalytic Proton acceptor. Positions 285, 317, and 369 each coordinate substrate.

Belongs to the RuBisCO large chain family. Type I subfamily. Heterohexadecamer of 8 large chains and 8 small chains; disulfide-linked. The disulfide link is formed within the large subunit homodimers. Mg(2+) is required as a cofactor. Post-translationally, the disulfide bond which can form in the large chain dimeric partners within the hexadecamer appears to be associated with oxidative stress and protein turnover.

The protein resides in the plastid. It is found in the chloroplast. The enzyme catalyses 2 (2R)-3-phosphoglycerate + 2 H(+) = D-ribulose 1,5-bisphosphate + CO2 + H2O. It carries out the reaction D-ribulose 1,5-bisphosphate + O2 = 2-phosphoglycolate + (2R)-3-phosphoglycerate + 2 H(+). Its function is as follows. RuBisCO catalyzes two reactions: the carboxylation of D-ribulose 1,5-bisphosphate, the primary event in carbon dioxide fixation, as well as the oxidative fragmentation of the pentose substrate in the photorespiration process. Both reactions occur simultaneously and in competition at the same active site. This is Ribulose bisphosphate carboxylase large chain from Polystichum munitum (Western sword-fern).